Consider the following 632-residue polypeptide: tRNA uridine 5-carboxymethylaminomethyl modification enzyme MnmG (632 aa).

13–18 (GGGHAG) serves as a coordination point for FAD. 273–287 (GPRYCPSIEDKIHRF) is a binding site for NAD(+).

Belongs to the MnmG family. As to quaternary structure, homodimer. Heterotetramer of two MnmE and two MnmG subunits. It depends on FAD as a cofactor.

It is found in the cytoplasm. NAD-binding protein involved in the addition of a carboxymethylaminomethyl (cmnm) group at the wobble position (U34) of certain tRNAs, forming tRNA-cmnm(5)s(2)U34. The protein is tRNA uridine 5-carboxymethylaminomethyl modification enzyme MnmG of Psychrobacter cryohalolentis (strain ATCC BAA-1226 / DSM 17306 / VKM B-2378 / K5).